The sequence spans 133 residues: Small ribosomal subunit protein uS8 (133 aa).

This sequence belongs to the universal ribosomal protein uS8 family. As to quaternary structure, part of the 30S ribosomal subunit. Contacts proteins S5 and S12.

Its function is as follows. One of the primary rRNA binding proteins, it binds directly to 16S rRNA central domain where it helps coordinate assembly of the platform of the 30S subunit. This is Small ribosomal subunit protein uS8 from Leptospira interrogans serogroup Icterohaemorrhagiae serovar copenhageni (strain Fiocruz L1-130).